Reading from the N-terminus, the 410-residue chain is Serine/threonine transporter SstT (410 aa).

The next 10 membrane-spanning stretches (helical) occupy residues Gly-15–Ser-35, Phe-49–Ile-69, Pro-82–Ser-102, Ile-118–Asn-138, Ala-142–Phe-162, Phe-190–Ala-210, Leu-217–Val-237, Met-299–Ile-319, Leu-331–Ile-351, and Phe-358–Leu-378.

Belongs to the dicarboxylate/amino acid:cation symporter (DAACS) (TC 2.A.23) family.

It is found in the cell inner membrane. It catalyses the reaction L-serine(in) + Na(+)(in) = L-serine(out) + Na(+)(out). It carries out the reaction L-threonine(in) + Na(+)(in) = L-threonine(out) + Na(+)(out). Its function is as follows. Involved in the import of serine and threonine into the cell, with the concomitant import of sodium (symport system). In Erwinia tasmaniensis (strain DSM 17950 / CFBP 7177 / CIP 109463 / NCPPB 4357 / Et1/99), this protein is Serine/threonine transporter SstT.